Consider the following 495-residue polypeptide: Glutamyl-tRNA(Gln) amidotransferase subunit A (495 aa).

Residues Lys78 and Ser158 each act as charge relay system in the active site. The active-site Acyl-ester intermediate is the Ser182.

This sequence belongs to the amidase family. GatA subfamily. In terms of assembly, heterotrimer of A, B and C subunits.

The catalysed reaction is L-glutamyl-tRNA(Gln) + L-glutamine + ATP + H2O = L-glutaminyl-tRNA(Gln) + L-glutamate + ADP + phosphate + H(+). Its function is as follows. Allows the formation of correctly charged Gln-tRNA(Gln) through the transamidation of misacylated Glu-tRNA(Gln) in organisms which lack glutaminyl-tRNA synthetase. The reaction takes place in the presence of glutamine and ATP through an activated gamma-phospho-Glu-tRNA(Gln). The polypeptide is Glutamyl-tRNA(Gln) amidotransferase subunit A (Roseobacter denitrificans (strain ATCC 33942 / OCh 114) (Erythrobacter sp. (strain OCh 114))).